Consider the following 159-residue polypeptide: 17 kDa surface antigen (159 aa).

The signal sequence occupies residues 1 to 19 (MKIISKIIVILLAASMLQA). Cysteine 20 carries N-palmitoyl cysteine lipidation. The S-diacylglycerol cysteine moiety is linked to residue cysteine 20.

Belongs to the rickettsiale 17 kDa surface antigen family.

The protein resides in the cell outer membrane. The sequence is that of 17 kDa surface antigen (omp) from Rickettsia bellii.